Consider the following 163-residue polypeptide: Transcription elongation factor GreA (163 aa).

Residues 12 to 73 (YEKIQKEFEA…ELSDLLARAQ (62 aa)) are a coiled coil.

This sequence belongs to the GreA/GreB family.

Functionally, necessary for efficient RNA polymerase transcription elongation past template-encoded arresting sites. The arresting sites in DNA have the property of trapping a certain fraction of elongating RNA polymerases that pass through, resulting in locked ternary complexes. Cleavage of the nascent transcript by cleavage factors such as GreA or GreB allows the resumption of elongation from the new 3'terminus. GreA releases sequences of 2 to 3 nucleotides. The sequence is that of Transcription elongation factor GreA from Nitratiruptor sp. (strain SB155-2).